Consider the following 342-residue polypeptide: Cathepsin B-like cysteine proteinase 2 (342 aa).

Residues Met1–Ala18 form the signal peptide. The propeptide at Asp19–Asp86 is activation peptide. Asn99 is a glycosylation site (N-linked (GlcNAc...) asparagine). Disulfide bonds link Cys100–Cys128, Cys111–Cys156, Cys147–Cys214, Cys148–Cys152, Cys185–Cys218, and Cys193–Cys205. Cys114 is an active-site residue. Asn138 carries an N-linked (GlcNAc...) asparagine glycan. Residue Asn198 is glycosylated (N-linked (GlcNAc...) asparagine). Residue His285 is part of the active site. Residue Asn296 is glycosylated (N-linked (GlcNAc...) asparagine). Residue Asn305 is part of the active site.

This sequence belongs to the peptidase C1 family.

Expression of the protease correlates with blood-feeding and suggests a role for the protease in blood digestion. The sequence is that of Cathepsin B-like cysteine proteinase 2 (AC-2) from Haemonchus contortus (Barber pole worm).